The chain runs to 65 residues: Prokaryotic ubiquitin-like protein UBact (65 aa).

Polar residues predominate over residues 1-17 (MEVNMPTTEQGQKNKQM). Residues 1-65 (MEVNMPTTEQ…ARRYRQRTGE (65 aa)) form a disordered region. Residues 35-65 (KVEKPNTEEILKRMRKVDPDQARRYRQRTGE) are compositionally biased toward basic and acidic residues. Residue Glu-65 forms an Isoglutamyl lysine isopeptide (Glu-Lys) (interchain with K-? in acceptor proteins) linkage.

Belongs to the ubiquitin-like protein UBact family.

Its function is as follows. May function as a protein modifier covalently attached to lysine residues of substrate proteins. This may serve to target the modified proteins for degradation by proteasomes. The protein is Prokaryotic ubiquitin-like protein UBact of Methylacidiphilum infernorum (isolate V4) (Methylokorus infernorum (strain V4)).